The primary structure comprises 195 residues: Transcriptional regulator LdrP (195 aa).

The region spanning Gly110–Ala182 is the HTH crp-type domain. The H-T-H motif DNA-binding region spans His142–Ala161.

As to quaternary structure, homodimer.

Activates transcription. Positively regulates PcrtB promoter upstream of the crtB operon in a cAMP-independent manner. Regulated genes include genes encoding DNA photolyase, phytoene synthase and cytochrome P450 monooxygenase, which are involved in carotenoid biosynthesis. Positively regulates the light-inducible gene cluster in the megaplasmid in a cAMP-independent manner. The sequence is that of Transcriptional regulator LdrP from Thermus thermophilus (strain ATCC 27634 / DSM 579 / HB8).